Consider the following 181-residue polypeptide: MNKYQELVVSKLTNVINNTAEGYDDKILSLVDAAGRTFIGGAGRSLLVSRFFAMRLVHAGYQVSMVGEVVTPSIQAGDLFIVISGSGSTETLMPLVKKAKSQGAKIIVISMKAQSPMAELADLVVPVGGNDANAFDKTHGMPMGTIFELSTLWFLEATIAKLVDQKGLTEEGMRAIHANLE.

An SIS domain is found at 27–168 (ILSLVDAAGR…IAKLVDQKGL (142 aa)). Residues S45 and 84-89 (SGSGST) contribute to the substrate site. The active-site Proton acceptor is the E148.

Belongs to the SIS family. PHI subfamily. Homodimer.

It carries out the reaction D-arabino-hex-3-ulose 6-phosphate = beta-D-fructose 6-phosphate. It participates in one-carbon metabolism; formaldehyde assimilation via RuMP pathway; D-fructose 6-phosphate from D-ribulose 5-phosphate and formaldehyde: step 2/2. Its function is as follows. Catalyzes the isomerization between 3-hexulose 6-phosphate and fructose 6-phosphate. The polypeptide is 3-hexulose-6-phosphate isomerase (rmpB) (Methylomonas aminofaciens).